The following is a 238-amino-acid chain: Tabinhibitin 5 (238 aa).

The signal sequence occupies residues 1–23 (MTSILVSRFLLAALVLQYATIDA). The short motif at 32–34 (RGD) is the Cell attachment site element. The region spanning 67-211 (LSKINDVRDH…KARALLTCNF (145 aa)) is the SCP domain.

The protein belongs to the CRISP family. As to expression, expressed in salivary glands.

It localises to the secreted. Functionally, inhibits platelet aggregation induced by all agonists tested (ADP, arachidonic acid, the thromboxane A2 analog U46619, thrombin, and snake venom snaclecs (TMVA that activates platelet through GPIB, and stejnulxin that specifically acts through GPVI (GP6))). May act by competing with fibrinogen for binding to glycoprotein IIb/IIIa (ITGA2B/ITGB3). This chain is Tabinhibitin 5, found in Tabanus yao (Horsefly).